Consider the following 192-residue polypeptide: Large ribosomal subunit protein uL6 (192 aa).

It belongs to the universal ribosomal protein uL6 family. In terms of assembly, part of the 50S ribosomal subunit.

In terms of biological role, this protein binds to the 23S rRNA, and is important in its secondary structure. It is located near the subunit interface in the base of the L7/L12 stalk, and near the tRNA binding site of the peptidyltransferase center. The protein is Large ribosomal subunit protein uL6 of Nanoarchaeum equitans (strain Kin4-M).